Consider the following 429-residue polypeptide: Glutamate-1-semialdehyde 2,1-aminomutase 2 (429 aa).

Position 268 is an N6-(pyridoxal phosphate)lysine (lysine 268).

The protein belongs to the class-III pyridoxal-phosphate-dependent aminotransferase family. HemL subfamily. In terms of assembly, homodimer. Pyridoxal 5'-phosphate is required as a cofactor.

Its subcellular location is the cytoplasm. It carries out the reaction (S)-4-amino-5-oxopentanoate = 5-aminolevulinate. It participates in porphyrin-containing compound metabolism; protoporphyrin-IX biosynthesis; 5-aminolevulinate from L-glutamyl-tRNA(Glu): step 2/2. This chain is Glutamate-1-semialdehyde 2,1-aminomutase 2, found in Bacillus cereus (strain ATCC 10987 / NRS 248).